The sequence spans 502 residues: Sodium/proline symporter (502 aa).

The next 13 membrane-spanning stretches (helical) occupy residues 6–26 (PMLV…FIAW), 42–62 (LGPF…WLLM), 68–88 (IFLS…GAWI), 127–147 (IISA…GIVA), 163–183 (ALWA…FLAV), 192–212 (SLMI…VGGF), 235–255 (FVAI…PHIL), 276–296 (TWMI…IAYF), 320–340 (ILFN…AVMS), 371–391 (LVWV…ALAA), 398–418 (LGLV…VVLF), 430–450 (ALAG…YGWL), and 452–472 (LYEI…FSLL).

It belongs to the sodium:solute symporter (SSF) (TC 2.A.21) family.

Its subcellular location is the cell inner membrane. It catalyses the reaction L-proline(in) + Na(+)(in) = L-proline(out) + Na(+)(out). Functionally, catalyzes the sodium-dependent uptake of extracellular L-proline. The protein is Sodium/proline symporter of Salmonella typhimurium (strain LT2 / SGSC1412 / ATCC 700720).